The following is a 345-amino-acid chain: UDP-3-O-acylglucosamine N-acyltransferase (345 aa).

Catalysis depends on His248, which acts as the Proton acceptor.

This sequence belongs to the transferase hexapeptide repeat family. LpxD subfamily. In terms of assembly, homotrimer.

It carries out the reaction a UDP-3-O-[(3R)-3-hydroxyacyl]-alpha-D-glucosamine + a (3R)-hydroxyacyl-[ACP] = a UDP-2-N,3-O-bis[(3R)-3-hydroxyacyl]-alpha-D-glucosamine + holo-[ACP] + H(+). It participates in bacterial outer membrane biogenesis; LPS lipid A biosynthesis. Catalyzes the N-acylation of UDP-3-O-acylglucosamine using 3-hydroxyacyl-ACP as the acyl donor. Is involved in the biosynthesis of lipid A, a phosphorylated glycolipid that anchors the lipopolysaccharide to the outer membrane of the cell. The polypeptide is UDP-3-O-acylglucosamine N-acyltransferase (Prochlorococcus marinus (strain SARG / CCMP1375 / SS120)).